The sequence spans 500 residues: Betaine aldehyde dehydrogenase, chloroplastic (500 aa).

Residues 1 to 7 (MSMPIPS) constitute a chloroplast transit peptide. Residue 238–243 (GSSATG) coordinates NAD(+). The active-site Proton acceptor is E260. The active-site Nucleophile is the C294.

Belongs to the aldehyde dehydrogenase family. As to quaternary structure, homodimer.

It localises to the plastid. The protein localises to the chloroplast. It catalyses the reaction betaine aldehyde + NAD(+) + H2O = glycine betaine + NADH + 2 H(+). The protein operates within amine and polyamine biosynthesis; betaine biosynthesis via choline pathway; betaine from betaine aldehyde: step 1/1. In Beta vulgaris (Sugar beet), this protein is Betaine aldehyde dehydrogenase, chloroplastic.